The chain runs to 212 residues: uncharacterized protein (212 aa).

The chain crosses the membrane as a helical span at residues 186–206 (VITLISFMLFSILFFLIFLIV).

The protein localises to the membrane. This is an uncharacterized protein from Mycoplasma genitalium (strain ATCC 33530 / DSM 19775 / NCTC 10195 / G37) (Mycoplasmoides genitalium).